The sequence spans 125 residues: Histone H2A.v3 (125 aa).

Belongs to the histone H2A family. As to quaternary structure, the nucleosome is a histone octamer containing two molecules each of H2A, H2B, H3 and H4 assembled in one H3-H4 heterotetramer and two H2A-H2B heterodimers. The octamer wraps approximately 147 bp of DNA.

It localises to the nucleus. The protein resides in the chromosome. In terms of biological role, core component of nucleosome which plays a central role in DNA double strand break (DSB) repair. Nucleosomes wrap and compact DNA into chromatin, limiting DNA accessibility to the cellular machineries which require DNA as a template. Histones thereby play a central role in transcription regulation, DNA repair, DNA replication and chromosomal stability. DNA accessibility is regulated via a complex set of post-translational modifications of histones, also called histone code, and nucleosome remodeling. The sequence is that of Histone H2A.v3 (H2Av3) from Dictyostelium discoideum (Social amoeba).